The following is a 629-amino-acid chain: tRNA uridine 5-carboxymethylaminomethyl modification enzyme MnmG (629 aa).

Residues 13–18, V125, and S180 each bind FAD; that span reads GGGHAG. Position 273–287 (273–287) interacts with NAD(+); the sequence is GPRYCPSIEDKVMRF. Q370 serves as a coordination point for FAD.

Belongs to the MnmG family. As to quaternary structure, homodimer. Heterotetramer of two MnmE and two MnmG subunits. The cofactor is FAD.

It localises to the cytoplasm. Its function is as follows. NAD-binding protein involved in the addition of a carboxymethylaminomethyl (cmnm) group at the wobble position (U34) of certain tRNAs, forming tRNA-cmnm(5)s(2)U34. This is tRNA uridine 5-carboxymethylaminomethyl modification enzyme MnmG from Shigella sonnei (strain Ss046).